Consider the following 559-residue polypeptide: Poly(U)-binding-splicing factor PUF60 (559 aa).

The inhibits homodimerization stretch occupies residues 1-516 (MATATIALQV…EDAEIIVKIF (516 aa)). Residues Gln14 and Lys43 each participate in a glycyl lysine isopeptide (Lys-Gly) (interchain with G-Cter in SUMO2) cross-link. Phosphothreonine is present on Thr60. Positions 77-559 (QSIKSVLVKQ…ERFDNSDLSA (483 aa)) are inhibits transcriptional repression, interaction with ERCC3 and apoptosis induction. Lys80 participates in a covalent cross-link: Glycyl lysine isopeptide (Lys-Gly) (interchain with G-Cter in SUMO2). Residue Ser112 is modified to Phosphoserine. 2 consecutive RRM domains span residues 129-207 (CRVY…RPSN) and 226-304 (NRIY…KAVT). Ser244 bears the Phosphoserine mark. Lys251 carries the post-translational modification N6-acetyllysine. Position 314 is a phosphothreonine (Thr314). The segment at 416 to 437 (KKEKEEEELFPESERPEMLSEQ) is disordered. Lys419 is covalently cross-linked (Glycyl lysine isopeptide (Lys-Gly) (interchain with G-Cter in SUMO2)). Over residues 427 to 437 (ESERPEMLSEQ) the composition is skewed to basic and acidic residues. Position 454 is an N6-acetyllysine (Lys454). Residue Lys458 forms a Glycyl lysine isopeptide (Lys-Gly) (interchain with G-Cter in SUMO2) linkage. Residues 462–549 (TVMVLRNMVD…RKVVAEVYDQ (88 aa)) form the RRM 3; atypical domain.

The protein belongs to the RRM half pint family. As to quaternary structure, homodimer. Associates with the spliceosome. Found in a complex with RO60 and Y5 RNA. Found in a complex with FUBP1 and far upstream element (FUSE) DNA segment. Interacts directly with ERCC3. Interacts with CDK7 and GTF2H1. Interacts with SRSF11/P54. Does not interact with ERCC3 in xeroderma pigmentosum complementation group B (XPB) cells. Interacts with ARGLU1; interaction may be involved in ARGLU1-mediated modulation of alternative splicing. As to expression, isoform 2 is expressed in colonic epithelium and colorectal epithelium cancer (at protein level). Isoform 6 is expressed in colorectal epithelial cancer but below detection level in colonic epithelium. Expressed in heart, brain, placenta, lung, liver, skeletal muscle, kidney, pancreas, spleen, thymus, prostate, testis, ovary, small intestine, colon and peripheral blood leukocytes.

The protein localises to the nucleus. DNA- and RNA-binding protein, involved in several nuclear processes such as pre-mRNA splicing, apoptosis and transcription regulation. In association with FUBP1 regulates MYC transcription at the P2 promoter through the core-TFIIH basal transcription factor. Acts as a transcriptional repressor through the core-TFIIH basal transcription factor. Represses FUBP1-induced transcriptional activation but not basal transcription. Decreases ERCC3 helicase activity. Does not repress TFIIH-mediated transcription in xeroderma pigmentosum complementation group B (XPB) cells. Is also involved in pre-mRNA splicing. Promotes splicing of an intron with weak 3'-splice site and pyrimidine tract in a cooperative manner with U2AF2. Involved in apoptosis induction when overexpressed in HeLa cells. Isoform 6 failed to repress MYC transcription and inhibited FIR-induced apoptosis in colorectal cancer. Isoform 6 may contribute to tumor progression by enabling increased MYC expression and greater resistance to apoptosis in tumors than in normal cells. Modulates alternative splicing of several mRNAs. Binds to relaxed DNA of active promoter regions. Binds to the pyrimidine tract and 3'-splice site regions of pre-mRNA; binding is enhanced in presence of U2AF2. Binds to Y5 RNA in association with RO60. Binds to poly(U) RNA. The chain is Poly(U)-binding-splicing factor PUF60 from Homo sapiens (Human).